We begin with the raw amino-acid sequence, 439 residues long: tRNA modification GTPase MnmE (439 aa).

Positions 23, 80, and 120 each coordinate (6S)-5-formyl-5,6,7,8-tetrahydrofolate. The TrmE-type G domain maps to Gly217–Pro365. Residue Asn227 participates in K(+) binding. GTP-binding positions include Asn227–Ser232, Thr246–Thr252, and Asp271–Gly274. Ser231 lines the Mg(2+) pocket. K(+)-binding residues include Thr246, Val248, and Thr251. Mg(2+) is bound at residue Thr252. Position 439 (Lys439) interacts with (6S)-5-formyl-5,6,7,8-tetrahydrofolate.

Belongs to the TRAFAC class TrmE-Era-EngA-EngB-Septin-like GTPase superfamily. TrmE GTPase family. Homodimer. Heterotetramer of two MnmE and two MnmG subunits. K(+) serves as cofactor.

Its subcellular location is the cytoplasm. In terms of biological role, exhibits a very high intrinsic GTPase hydrolysis rate. Involved in the addition of a carboxymethylaminomethyl (cmnm) group at the wobble position (U34) of certain tRNAs, forming tRNA-cmnm(5)s(2)U34. This is tRNA modification GTPase MnmE from Rhizobium meliloti (strain 1021) (Ensifer meliloti).